Reading from the N-terminus, the 255-residue chain is Small ribosomal subunit protein uS2 (255 aa).

The protein belongs to the universal ribosomal protein uS2 family.

The protein is Small ribosomal subunit protein uS2 of Streptococcus thermophilus (strain CNRZ 1066).